The following is a 332-amino-acid chain: Serpentine receptor class gamma-3 (332 aa).

The next 7 membrane-spanning stretches (helical) occupy residues 23-43 (FAYL…IWVS), 72-92 (LIFT…SEIV), 101-121 (IYYC…IFIA), 144-164 (IMLI…LISD), 184-204 (WASL…ITMV), 231-251 (AALI…FAFF), and 263-283 (YLRF…LLLV).

The protein belongs to the nematode receptor-like protein srg family.

The protein resides in the membrane. This is Serpentine receptor class gamma-3 (srg-3) from Caenorhabditis elegans.